Reading from the N-terminus, the 356-residue chain is S-adenosylmethionine:tRNA ribosyltransferase-isomerase (356 aa).

Belongs to the QueA family. Monomer.

It localises to the cytoplasm. It carries out the reaction 7-aminomethyl-7-carbaguanosine(34) in tRNA + S-adenosyl-L-methionine = epoxyqueuosine(34) in tRNA + adenine + L-methionine + 2 H(+). The protein operates within tRNA modification; tRNA-queuosine biosynthesis. Its function is as follows. Transfers and isomerizes the ribose moiety from AdoMet to the 7-aminomethyl group of 7-deazaguanine (preQ1-tRNA) to give epoxyqueuosine (oQ-tRNA). The protein is S-adenosylmethionine:tRNA ribosyltransferase-isomerase of Escherichia coli O6:H1 (strain CFT073 / ATCC 700928 / UPEC).